We begin with the raw amino-acid sequence, 692 residues long: Elongation factor G (692 aa).

A tr-type G domain is found at 8–283 (KNTRNIGIMA…AVVDYLPSPV (276 aa)). GTP-binding positions include 17 to 24 (AHIDAGKT), 81 to 85 (DTPGH), and 135 to 138 (NKMD).

The protein belongs to the TRAFAC class translation factor GTPase superfamily. Classic translation factor GTPase family. EF-G/EF-2 subfamily.

The protein resides in the cytoplasm. Functionally, catalyzes the GTP-dependent ribosomal translocation step during translation elongation. During this step, the ribosome changes from the pre-translocational (PRE) to the post-translocational (POST) state as the newly formed A-site-bound peptidyl-tRNA and P-site-bound deacylated tRNA move to the P and E sites, respectively. Catalyzes the coordinated movement of the two tRNA molecules, the mRNA and conformational changes in the ribosome. The chain is Elongation factor G from Exiguobacterium sp. (strain ATCC BAA-1283 / AT1b).